The chain runs to 567 residues: DNA ligase B (567 aa).

Lys132 functions as the N6-AMP-lysine intermediate in the catalytic mechanism.

The protein belongs to the NAD-dependent DNA ligase family. LigB subfamily.

The catalysed reaction is NAD(+) + (deoxyribonucleotide)n-3'-hydroxyl + 5'-phospho-(deoxyribonucleotide)m = (deoxyribonucleotide)n+m + AMP + beta-nicotinamide D-nucleotide.. In terms of biological role, catalyzes the formation of phosphodiester linkages between 5'-phosphoryl and 3'-hydroxyl groups in double-stranded DNA using NAD as a coenzyme and as the energy source for the reaction. This Yersinia pseudotuberculosis serotype IB (strain PB1/+) protein is DNA ligase B.